The following is a 641-amino-acid chain: Phosphomethylpyrimidine synthase (641 aa).

Residues N221, M250, Y279, H315, 335 to 337, 376 to 379, and E415 each bind substrate; these read SRG and DGLR. H419 is a Zn(2+) binding site. Y442 provides a ligand contact to substrate. H483 lines the Zn(2+) pocket. Residues C563, C566, and C571 each contribute to the [4Fe-4S] cluster site.

Belongs to the ThiC family. As to quaternary structure, homodimer. [4Fe-4S] cluster serves as cofactor.

The enzyme catalyses 5-amino-1-(5-phospho-beta-D-ribosyl)imidazole + S-adenosyl-L-methionine = 4-amino-2-methyl-5-(phosphooxymethyl)pyrimidine + CO + 5'-deoxyadenosine + formate + L-methionine + 3 H(+). It participates in cofactor biosynthesis; thiamine diphosphate biosynthesis. Its function is as follows. Catalyzes the synthesis of the hydroxymethylpyrimidine phosphate (HMP-P) moiety of thiamine from aminoimidazole ribotide (AIR) in a radical S-adenosyl-L-methionine (SAM)-dependent reaction. The chain is Phosphomethylpyrimidine synthase from Rhodopseudomonas palustris (strain TIE-1).